Reading from the N-terminus, the 1295-residue chain is DNA-directed RNA polymerase subunit beta' (1295 aa).

The Zn(2+) site is built by Cys60, Cys62, Cys75, and Cys78. Positions 516, 518, and 520 each coordinate Mg(2+). Residues Cys841, Cys914, Cys921, and Cys924 each contribute to the Zn(2+) site.

This sequence belongs to the RNA polymerase beta' chain family. As to quaternary structure, the RNAP catalytic core consists of 2 alpha, 1 beta, 1 beta' and 1 omega subunit. When a sigma factor is associated with the core the holoenzyme is formed, which can initiate transcription. It depends on Mg(2+) as a cofactor. Zn(2+) serves as cofactor.

It catalyses the reaction RNA(n) + a ribonucleoside 5'-triphosphate = RNA(n+1) + diphosphate. DNA-dependent RNA polymerase catalyzes the transcription of DNA into RNA using the four ribonucleoside triphosphates as substrates. In Dehalococcoides mccartyi (strain CBDB1), this protein is DNA-directed RNA polymerase subunit beta'.